Here is a 337-residue protein sequence, read N- to C-terminus: Protein AMBP (337 aa).

The signal sequence occupies residues 1–4 (AVSA). 3-hydroxy-L-kynurenine-binding residues include C38 and K96. C76 and C173 are disulfide-bonded. N-linked (GlcNAc...) asparagine glycosylation is present at N100. 3-hydroxy-L-kynurenine is bound by residues K122 and K134. A glycan (O-linked (Xyl...) (chondroitin sulfate) serine) is linked at S200. Disulfide bonds link C216–C266, C225–C249, C241–C262, C272–C322, C281–C305, and C297–C318. BPTI/Kunitz inhibitor domains follow at residues 216–266 (CQLG…LQTC) and 272–322 (CSLP…KEYC). N-linked (GlcNAc...) asparagine glycosylation is present at N235.

The protein in the N-terminal section; belongs to the calycin superfamily. Lipocalin family. As to quaternary structure, monomer. Homodimer. In plasma, it occurs as a monomer or dimer and in covalently-linked complexes with immunoglobulin A (IgA), ALB/albumin and F2/prothrombin. Chromophore-bound alpha-1-microglobulin interacts with the constant region of immunoglobulin A. Chromophore-bound alpha-1-microglobulin interacts with ALB with molar ratio 2:1 and 1:1; this interaction does not prevent fatty acid binding to ALB. Interacts with F2/prothrombin (via N-terminus) with molar ratio 2:1 and 1:1; this interaction does not prevent the activation of prothrombin to thrombin. Interacts with NDUFAB1, a subunit of mitochondrial complex I. Interacts with FN1. In terms of assembly, I-alpha-I plasma protease inhibitors are assembled from one or two heavy chains (HC) and one light chain, bikunin. Inter-alpha-inhibitor (I-alpha-I) is composed of ITIH1/HC1, ITIH2/HC2 and bikunin, and pre-alpha-inhibitor (P-alpha-I) of ITIH3/HC3 and bikunin. Interacts with TNFAIP6 (via Link domain). Monomer. Also occurs as a complex with tryptase in mast cells. The precursor is proteolytically processed into separately functioning proteins. Post-translationally, proteolytically cleaved in the presence of oxyhemoglobin or MPO. In terms of processing, 3-hydroxykynurenine, an oxidized tryptophan metabolite that is common in biological fluids, reacts with Cys-53, Lys-111, Lys-137, and Lys-149 to form heterogeneous polycyclic chromophores including hydroxanthommatin. The reaction by alpha-1-microglobulin is autocatalytic; the human protein forms chromophore even when expressed in insect and bacterial cells. The chromophore can react with accessible cysteines forming non-reducible thioether cross-links with other molecules of alpha-1-microglobulin or with other proteins such as Ig alpha-1 chain C region 'Cys-352'. Heavy chains are interlinked with bikunin via a chondroitin 4-sulfate bridge to the C-terminal aspartate. Post-translationally, proteolytically cleaved by PRSS3 at Kunitz domain 2. In terms of tissue distribution, expressed by the liver and secreted in plasma.

It localises to the secreted. The protein localises to the endoplasmic reticulum. The protein resides in the cytoplasm. Its subcellular location is the cytosol. It is found in the cell membrane. It localises to the nucleus membrane. The protein localises to the mitochondrion inner membrane. The protein resides in the extracellular space. Its subcellular location is the extracellular matrix. Functionally, antioxidant and tissue repair protein with reductase, heme-binding and radical-scavenging activities. Removes and protects against harmful oxidants and repairs macromolecules in intravascular and extravascular spaces and in intracellular compartments. Intravascularly, plays a regulatory role in red cell homeostasis by preventing heme- and reactive oxygen species-induced cell damage. Binds and degrades free heme to protect fetal and adult red blood cells from hemolysis. Reduces extracellular methemoglobin, a Fe3+ (ferric) form of hemoglobin that cannot bind oxygen, back to the Fe2+ (ferrous) form deoxyhemoglobin, which has oxygen-carrying potential. Upon acute inflammation, inhibits oxidation of low-density lipoprotein particles by MPO and limits vascular damage. Extravascularly, protects from oxidation products formed on extracellular matrix structures and cell membranes. Catalyzes the reduction of carbonyl groups on oxidized collagen fibers and preserves cellular and extracellular matrix ultrastructures. Importantly, counteracts the oxidative damage at blood-placenta interface, preventing leakage of free fetal hemoglobin into the maternal circulation. Intracellularly, has a role in maintaining mitochondrial redox homeostasis. Bound to complex I of the respiratory chain of mitochondria, may scavenge free radicals and preserve mitochondrial ATP synthesis. Protects renal tubule epithelial cells from heme-induced oxidative damage to mitochondria. Reduces cytochrome c from Fe3+ (ferric) to the Fe2+ (ferrous) state through formation of superoxide anion radicals in the presence of ascorbate or NADH/NADPH electron donor cofactors, ascorbate being the preferred cofactor. Has a chaperone role in facilitating the correct folding of bikunin in the endoplasmic reticulum compartment. In terms of biological role, kunitz-type serine protease inhibitor and structural component of extracellular matrix with a role in extracellular space remodeling and cell adhesion. Among others, has antiprotease activity toward kallikrein, a protease involved in airway inflammation; inhibits GZMK/granzyme, a granule-stored serine protease involved in NK and T cell cytotoxic responses; and inhibits PLG/plasmin, a protease required for activation of matrix metalloproteinases. As part of I-alpha-I complex, provides for the heavy chains to be transferred from I-alpha-I complex to hyaluronan in the presence of TNFAIP6, in a dynamic process that releases free bikunin and remodels extracellular matrix proteoglycan structures. Free bikunin, but not its heavy chain-bound form, acts as a potent protease inhibitor in airway secretions. Part of hyaluronan-rich extracellular matrix that surrounds oocyte during cumulus oophorus expansion, an indispensable process for proper ovulation. Also inhibits calcium oxalate crystallization. Kunitz-type serine protease inhibitor. Has high catalytic efficiency for F10/blood coagulation factor Xa and may act as an anticoagulant by inhibiting prothrombin activation. Inhibits trypsin and mast cell CMA1/chymase and tryptase proteases. This is Protein AMBP (AMBP) from Sus scrofa (Pig).